A 267-amino-acid chain; its full sequence is Large ribosomal subunit protein uL4 (267 aa).

This sequence belongs to the universal ribosomal protein uL4 family. As to quaternary structure, part of the 50S ribosomal subunit.

Functionally, one of the primary rRNA binding proteins, this protein initially binds near the 5'-end of the 23S rRNA. It is important during the early stages of 50S assembly. It makes multiple contacts with different domains of the 23S rRNA in the assembled 50S subunit and ribosome. Its function is as follows. Forms part of the polypeptide exit tunnel. The polypeptide is Large ribosomal subunit protein uL4 (Saccharolobus islandicus (strain M.16.27) (Sulfolobus islandicus)).